We begin with the raw amino-acid sequence, 230 residues long: All-trans retinoic acid-induced differentiation factor (230 aa).

A signal peptide spans 1 to 26; that stretch reads MTANVTVSSMYLFTVLLLLFNVYVNS. The Extracellular portion of the chain corresponds to 27-200; sequence QDTDAQLCQM…YKCMRQGEFP (174 aa). Residues 152 to 194 enclose the EGF-like domain; the sequence is QKNACNQTVQMPLVCPENSLCSPYGPGFFECSCLNNFHGYKCM. 3 cysteine pairs are disulfide-bonded: cysteine 156–cysteine 172, cysteine 166–cysteine 182, and cysteine 184–cysteine 193. Residues 201–221 form a helical membrane-spanning segment; sequence LVKVLGILTASTVVVSSVLWF. Residues 222 to 230 lie on the Cytoplasmic side of the membrane; that stretch reads TQRRKVKNT.

Its subcellular location is the nucleus envelope. The protein localises to the cell membrane. It is found in the lysosome membrane. Involved in osteoblast cell differentiation. May play a role in inducing the cell cycle arrest. The chain is All-trans retinoic acid-induced differentiation factor (atraid) from Danio rerio (Zebrafish).